We begin with the raw amino-acid sequence, 329 residues long: DNA-directed RNA polymerase subunit alpha (329 aa).

The segment at 1 to 235 (MVREKVKVST…DLFIPFLHTE (235 aa)) is alpha N-terminal domain (alpha-NTD). The segment at 269–329 (IALKYIFIDQ…KQILGILEKK (61 aa)) is alpha C-terminal domain (alpha-CTD).

Belongs to the RNA polymerase alpha chain family. As to quaternary structure, in plastids the minimal PEP RNA polymerase catalytic core is composed of four subunits: alpha, beta, beta', and beta''. When a (nuclear-encoded) sigma factor is associated with the core the holoenzyme is formed, which can initiate transcription.

The protein resides in the plastid. It localises to the chloroplast. It carries out the reaction RNA(n) + a ribonucleoside 5'-triphosphate = RNA(n+1) + diphosphate. In terms of biological role, DNA-dependent RNA polymerase catalyzes the transcription of DNA into RNA using the four ribonucleoside triphosphates as substrates. The protein is DNA-directed RNA polymerase subunit alpha of Gossypium hirsutum (Upland cotton).